Reading from the N-terminus, the 180-residue chain is Large ribosomal subunit protein uL6 (180 aa).

This sequence belongs to the universal ribosomal protein uL6 family. Part of the 50S ribosomal subunit.

In terms of biological role, this protein binds to the 23S rRNA, and is important in its secondary structure. It is located near the subunit interface in the base of the L7/L12 stalk, and near the tRNA binding site of the peptidyltransferase center. In Mesoplasma florum (strain ATCC 33453 / NBRC 100688 / NCTC 11704 / L1) (Acholeplasma florum), this protein is Large ribosomal subunit protein uL6.